The sequence spans 311 residues: ATP synthase gamma chain (311 aa).

It belongs to the ATPase gamma chain family. F-type ATPases have 2 components, CF(1) - the catalytic core - and CF(0) - the membrane proton channel. CF(1) has five subunits: alpha(3), beta(3), gamma(1), delta(1), epsilon(1). CF(0) has three main subunits: a, b and c.

The protein resides in the cell membrane. Functionally, produces ATP from ADP in the presence of a proton gradient across the membrane. The gamma chain is believed to be important in regulating ATPase activity and the flow of protons through the CF(0) complex. In Limosilactobacillus fermentum (strain NBRC 3956 / LMG 18251) (Lactobacillus fermentum), this protein is ATP synthase gamma chain.